The sequence spans 154 residues: MRIMGLDLGDKKIGVALSDPMGWTAQGLDVIAVKGPPEASVERISELVRQYGVGKIVVGLPRNMNGSFGPRAERARAFAGCLAGALNLPVELWDERMTTLEAEKLLIEADLSRARRRQVIDKMAAVLILQSFLDSQGRPRREAGGKNPGGPEEP.

It belongs to the YqgF nuclease family.

It localises to the cytoplasm. Could be a nuclease involved in processing of the 5'-end of pre-16S rRNA. This Pelotomaculum thermopropionicum (strain DSM 13744 / JCM 10971 / SI) protein is Putative pre-16S rRNA nuclease.